The chain runs to 137 residues: Large ribosomal subunit protein uL16 (137 aa).

Belongs to the universal ribosomal protein uL16 family. In terms of assembly, part of the 50S ribosomal subunit.

Functionally, binds 23S rRNA and is also seen to make contacts with the A and possibly P site tRNAs. The polypeptide is Large ribosomal subunit protein uL16 (Mesoplasma florum (strain ATCC 33453 / NBRC 100688 / NCTC 11704 / L1) (Acholeplasma florum)).